The chain runs to 514 residues: 2,3-bisphosphoglycerate-independent phosphoglycerate mutase (514 aa).

Mn(2+) contacts are provided by D14 and S64. The active-site Phosphoserine intermediate is the S64. Residues H125, R155–D156, R187, R193, R263–R266, and K336 each bind substrate. Mn(2+)-binding residues include D403, H407, D444, H445, and H463.

The protein belongs to the BPG-independent phosphoglycerate mutase family. In terms of assembly, monomer. Mn(2+) is required as a cofactor.

The catalysed reaction is (2R)-2-phosphoglycerate = (2R)-3-phosphoglycerate. Its pathway is carbohydrate degradation; glycolysis; pyruvate from D-glyceraldehyde 3-phosphate: step 3/5. With respect to regulation, insensitive to vanadate. In terms of biological role, catalyzes the interconversion of 2-phosphoglycerate (2-PGA) and 3-phosphoglycerate (3-PGA). The polypeptide is 2,3-bisphosphoglycerate-independent phosphoglycerate mutase (Escherichia coli (strain K12)).